We begin with the raw amino-acid sequence, 439 residues long: MDVDQLILFVFVCCLSSRFADAYDPVDPNGNIIINWDFQSIENVYTVMVSVHNHQLYRHIEQPGWRLSWRWAGNEIIWGMTGAEATEQGDCHRIRGATRPHCCEKQPVIVDLPPGTPYNNQVSSCCRGGVLSSLTQNNRTSTAAFQMVVGGFRRATYHDGDRGPALPSRFGVGVPGYSCSNATKVNATSSERFLLPRARAPCAVTWQVTCTYSQFMEAASPTCCVSLSSFYNSTIVPCPRCSCGCPRSPTAPQCISEGEKPELPAGDGEAVAPVFRCTDHMCPVRVHWHVKISYREYWRVKVTITNYNQVKNYSDWNLVVQHPNLRSLTQLFSFNYQPLIEYGTLNDTGMFWGIQYYNEMMLQDGNVQTEMILKKDKSDFTFSGGWAFPRRVYFDGHECVMPPPDQYPLLPNGGPDSRVSAAQLIASSCLLLPFIFLIM.

A signal peptide spans 1–22; that stretch reads MDVDQLILFVFVCCLSSRFADA. N-linked (GlcNAc...) asparagine glycans are attached at residues N138, N181, N186, N232, N312, and N346. N412 carries the GPI-anchor amidated asparagine lipid modification. Residues 413 to 439 constitute a propeptide, removed in mature form; it reads GGPDSRVSAAQLIASSCLLLPFIFLIM.

This sequence belongs to the COBRA family.

The protein localises to the cell membrane. Involved in determining the orientation of cell expansion, probably by playing an important role in cellulose deposition. May act by recruiting cellulose synthesizing complexes to discrete positions on the cell surface. The chain is COBRA-like protein 7 (BC1LP1) from Oryza sativa subsp. japonica (Rice).